The chain runs to 163 residues: Large ribosomal subunit protein uL10 (163 aa).

Belongs to the universal ribosomal protein uL10 family. As to quaternary structure, part of the ribosomal stalk of the 50S ribosomal subunit. The N-terminus interacts with L11 and the large rRNA to form the base of the stalk. The C-terminus forms an elongated spine to which L12 dimers bind in a sequential fashion forming a multimeric L10(L12)X complex.

Its function is as follows. Forms part of the ribosomal stalk, playing a central role in the interaction of the ribosome with GTP-bound translation factors. This chain is Large ribosomal subunit protein uL10, found in Actinobacillus succinogenes (strain ATCC 55618 / DSM 22257 / CCUG 43843 / 130Z).